Here is a 463-residue protein sequence, read N- to C-terminus: Chaperone SurA (463 aa).

A signal peptide spans 1–25; that stretch reads MTRYFSIVLSLLLAVSCVFLPVASA. 2 PpiC domains span residues 175–277 and 291–390; these read GAQY…KLVE and ATEY…QRLG. A disordered region spans residues 439-463; it reads ADDHHTPSAAVTPATGAVLPAATKH.

It is found in the periplasm. The enzyme catalyses [protein]-peptidylproline (omega=180) = [protein]-peptidylproline (omega=0). Its function is as follows. Chaperone involved in the correct folding and assembly of outer membrane proteins. Recognizes specific patterns of aromatic residues and the orientation of their side chains, which are found more frequently in integral outer membrane proteins. May act in both early periplasmic and late outer membrane-associated steps of protein maturation. This chain is Chaperone SurA, found in Xylella fastidiosa (strain Temecula1 / ATCC 700964).